Consider the following 551-residue polypeptide: Calnexin (551 aa).

A signal peptide spans 1–23 (MRPQNVAGVAGTGALIMAAGALA). Residues 24 to 477 (DQTVFHPTSL…QAIKQMPEVA (454 aa)) are Lumenal-facing. Residues 293-315 (EEEPETIPDPEAEKPEEWDDEED) are disordered. The chain crosses the membrane as a helical span at residues 478–498 (AGLAAAVFTLLGMLLALFGFI). Residues 499-551 (GSAPTKVKQTTVKTKAVAPVAPAGEEEKKALDQAGVEIPAEGSKKRVTRSTKE) lie on the Cytoplasmic side of the membrane. Residues 526-551 (KKALDQAGVEIPAEGSKKRVTRSTKE) are disordered.

Belongs to the calreticulin family.

Its subcellular location is the endoplasmic reticulum membrane. Endoplasmic reticulum (ER) chaperone that functions to stabilize non-native glycoproteins and retain them in the ER until they are properly folded or targeted for ER associated degradation (ERAD). With co-chaperone DNJ1, coordinately maintains ER homeostasis and contributes to maintenance of cell wall architecture. In Cryptococcus neoformans var. grubii serotype A (strain H99 / ATCC 208821 / CBS 10515 / FGSC 9487) (Filobasidiella neoformans var. grubii), this protein is Calnexin.